Reading from the N-terminus, the 256-residue chain is UPF0259 membrane protein plu2479 (256 aa).

A run of 5 helical transmembrane segments spans residues 23–43 (TLTLAVLAALVTTLLGHLFIP), 89–109 (IFSSMIGSVLLVGGVLTLVAA), 132–152 (LFLLLLICTLLIQFGLMLMLV), 192–212 (LLVPAILLWLTARLLLVFIID), and 221–241 (MAGIILGVFNNLISAILLIYL).

Belongs to the UPF0259 family.

It is found in the cell inner membrane. This chain is UPF0259 membrane protein plu2479, found in Photorhabdus laumondii subsp. laumondii (strain DSM 15139 / CIP 105565 / TT01) (Photorhabdus luminescens subsp. laumondii).